Consider the following 267-residue polypeptide: MAVISMKQLLEAGVHFGHQTRRWNPKMKPYIFTERNGIYIIDLQKTVKMIDSAYNFVKDAAADDGVILFVGTKKQAQDSIEEEATRAGQYYVNHRWLGGTLTNWNTIQTRIKRLKDLKKMEADGTFERLPKKEVSLLMKQRAKLEKFLGGIEDMPRIPDVIFIVDPRKEQIAVKEAQKLNIPIVAMVDTNTDPDDIDVIIPSNDDAIRAVRLITSKMADAVIEGRQGEDEDVTEDSFKDNKDAKKSVDSLEDIVEAVEGDNDAKSDK.

The disordered stretch occupies residues 224 to 244 (GRQGEDEDVTEDSFKDNKDAK). Over residues 235–244 (DSFKDNKDAK) the composition is skewed to basic and acidic residues.

It belongs to the universal ribosomal protein uS2 family.

The protein is Small ribosomal subunit protein uS2 of Lactiplantibacillus plantarum (strain ATCC BAA-793 / NCIMB 8826 / WCFS1) (Lactobacillus plantarum).